The sequence spans 144 residues: Transmembrane protein 170A (144 aa).

Residues 1 to 50 (MEREGSGGSGGSAGLLQQILSLKVVPRVGNGTLCPNSTSLCSFPEMWYGV) are Lumenal-facing. N-linked (GlcNAc...) asparagine glycans are attached at residues Asn30 and Asn36. A helical membrane pass occupies residues 51 to 71 (FLWALVSSLFFHVPAGLLALF). Topologically, residues 72–85 (TLRHHKYGRFMSVS) are cytoplasmic. The chain crosses the membrane as a helical span at residues 86–106 (ILLMGIVGPITAGILTSAAIA). Residues 107-116 (GVYRAAGKEM) are Lumenal-facing. A helical membrane pass occupies residues 117–137 (IPFEALTLGTGQTFCVLVVSF). The Cytoplasmic portion of the chain corresponds to 138–144 (LRILATL).

This sequence belongs to the TMEM170 family. As to quaternary structure, interacts with RTN4.

It localises to the endoplasmic reticulum membrane. The protein resides in the nucleus envelope. Functionally, acts as a regulator of endoplasmic reticulum (ER) and nuclear envelope (NE) morphogenesis. Affects the ratio between tubular ER and ER sheets by promoting sheet formation at the expense of tubules. Influences NE expansion, nuclear pore complex formation and proper localization of inner nuclear membrane proteins. The polypeptide is Transmembrane protein 170A (TMEM170A) (Homo sapiens (Human)).